The following is a 131-amino-acid chain: Small ribosomal subunit protein uS11 (131 aa).

It belongs to the universal ribosomal protein uS11 family. As to quaternary structure, part of the 30S ribosomal subunit. Interacts with proteins S7 and S18. Binds to IF-3.

Located on the platform of the 30S subunit, it bridges several disparate RNA helices of the 16S rRNA. Forms part of the Shine-Dalgarno cleft in the 70S ribosome. The sequence is that of Small ribosomal subunit protein uS11 from Wigglesworthia glossinidia brevipalpis.